The chain runs to 102 residues: UPF0751 protein Dhaf_1351 (102 aa).

The protein belongs to the UPF0751 family.

This is UPF0751 protein Dhaf_1351 from Desulfitobacterium hafniense (strain DSM 10664 / DCB-2).